Here is a 237-residue protein sequence, read N- to C-terminus: MQQSKEERVHDVFEKISDKYDVMNSVISFQRHKAWRKETMRIMDVKPGSKALDVCCGTADWTIALANAVGPNGEVKGLDFSENMLAVGKEKVKALGLEQVELMHGNAMELPFEDHTFDYVTIGFGLRNVPDYMHVLKEMTRVVKPGGKVICLETSQPTMIGFRQIYILYFKYIMPLFGKIFAKSYKEYSWLQESASTFPGMKELARMFEDAGLERIQVKPFTFGVAAMHLGVKPESE.

Residues threonine 58, aspartate 79, and 106-107 each bind S-adenosyl-L-methionine; that span reads NA.

The protein belongs to the class I-like SAM-binding methyltransferase superfamily. MenG/UbiE family.

The enzyme catalyses a 2-demethylmenaquinol + S-adenosyl-L-methionine = a menaquinol + S-adenosyl-L-homocysteine + H(+). It participates in quinol/quinone metabolism; menaquinone biosynthesis; menaquinol from 1,4-dihydroxy-2-naphthoate: step 2/2. In terms of biological role, methyltransferase required for the conversion of demethylmenaquinol (DMKH2) to menaquinol (MKH2). This is Demethylmenaquinone methyltransferase from Bacillus cytotoxicus (strain DSM 22905 / CIP 110041 / 391-98 / NVH 391-98).